We begin with the raw amino-acid sequence, 256 residues long: Putative adhesin P1-like protein MPN_132 (256 aa).

Over residues 56–72 (AVSESQAATSSTTTTAT) the composition is skewed to low complexity. 2 disordered regions span residues 56-115 (AVSE…PYLH) and 149-235 (FGTD…EVVG). Positions 96–112 (KASTQGSGQTNSQNTSP) are enriched in polar residues. Composition is skewed to low complexity over residues 155–179 (TQPQ…LGSV) and 211–222 (STSDGNTSSTNN).

Belongs to the adhesin P1 family.

This Mycoplasma pneumoniae (strain ATCC 29342 / M129 / Subtype 1) (Mycoplasmoides pneumoniae) protein is Putative adhesin P1-like protein MPN_132.